A 305-amino-acid polypeptide reads, in one-letter code: tRNA uridine(34) hydroxylase (305 aa).

Residues 125–219 (ADENTVVVDK…YLEEVPREQS (95 aa)) form the Rhodanese domain. Residue Cys-179 is the Cysteine persulfide intermediate of the active site.

Belongs to the TrhO family.

It carries out the reaction uridine(34) in tRNA + AH2 + O2 = 5-hydroxyuridine(34) in tRNA + A + H2O. Catalyzes oxygen-dependent 5-hydroxyuridine (ho5U) modification at position 34 in tRNAs. This chain is tRNA uridine(34) hydroxylase, found in Brucella abortus (strain S19).